The chain runs to 864 residues: MRLALLWALGLLGAGSPRPSPPLPNIGGTEEEQQASPERTQSRSLENQVVQDSPPINLTEVLQTGLPETLRIGLELDGENHILELQQNRDLVPGRPTLVWYQPDGTRMVSEGHSLENCCYRGRVQGRPSSWVSLCACSGIRGLVVLSPERSYTLELGPGDLQRPLIVSRIQDLLLPGHTCAPSWHAFVPTEAAPDLLLEQHHLRRLKRDVVTETKIVELVIVADNSEVRKYPDFQQLLNRTLEVALLLDTFFQPLNVRVALVGLEAWTQRDLIEMSSNPAVLLDNFLRWRRTDLLPRLPHDSAQLVTVTSFSGPMVGMAIQNSICSPDFSGGVNMDHSTSILGVASSIAHELGHSLGLDHDSPGNSCPCPGPAPAKSCIMEASTDFLPGLNFSNCSRWALEKALLDGMGSCLFEWPPSRAPMSSLCGNMFVDPGEQCDCGFPDECTDPCCDYFTCQLRPGAQCASDGPCCQNCKLQPAGWQCRLPTDDCDLPEFCLGDSSQCPPDIRLGDGEPCASGEAVCMHGRCASYTRQCQSLWGPGAQPAAPLCLQTANTRGNAFGSCGRSPSGSYMPCNLRDAICGQLQCQWGRNQPLLGSVQDQLSEVLEANGTQLNCSWVDLDLGNDVAQPLLALPGTACGPGLVCIGHRCQPVDLLGAQECRSKCHGHGVCDSSRHCHCDEGWAPPDCMTQLRATSSLTTGLLLSLLLLLVLVLLGASYWYRARLHQRLCQLKGSSCQYRAAQSGPPERPGPPQRAQQMPGTKQANVSFPVPPSRPLPPNPVPKKLQAELADRSNPPTRPLPADPVVWRPKPQGPTKPPPPRKPLPANPQGRPPLGDLPGPGDGSLQLVVPSRPAPPPPAASSLYL.

Residues 1 to 17 form the signal peptide; that stretch reads MRLALLWALGLLGAGSP. The segment at 17–49 is disordered; the sequence is PRPSPPLPNIGGTEEEQQASPERTQSRSLENQV. Positions 18 to 208 are excised as a propeptide; that stretch reads RPSPPLPNIG…EQHHLRRLKR (191 aa). The span at 34–49 shows a compositional bias: polar residues; the sequence is QASPERTQSRSLENQV. Asn57 is a glycosylation site (N-linked (GlcNAc...) asparagine). The Cysteine switch motif lies at 178 to 185; the sequence is HTCAPSWH. Cys180 is a Zn(2+) binding site. Residues 209 to 698 lie on the Extracellular side of the membrane; sequence DVVTETKIVE…QLRATSSLTT (490 aa). Residues 215-416 form the Peptidase M12B domain; sequence KIVELVIVAD…GMGSCLFEWP (202 aa). Asn239 is a glycosylation site (N-linked (GlcNAc...) asparagine). 4 disulfide bridges follow: Cys325–Cys411, Cys367–Cys395, Cys369–Cys378, and Cys482–Cys502. A Zn(2+)-binding site is contributed by His350. Glu351 is an active-site residue. The Zn(2+) site is built by His354 and His360. 2 N-linked (GlcNAc...) asparagine glycosylation sites follow: Asn391 and Asn394. In terms of domain architecture, Disintegrin spans 423–510; the sequence is SSLCGNMFVD…QCPPDIRLGD (88 aa). 2 N-linked (GlcNAc...) asparagine glycosylation sites follow: Asn608 and Asn613. 3 disulfides stabilise this stretch: Cys659–Cys669, Cys663–Cys675, and Cys677–Cys686. Residues 659 to 687 enclose the EGF-like domain; it reads CRSKCHGHGVCDSSRHCHCDEGWAPPDCM. The helical transmembrane segment at 699–719 threads the bilayer; that stretch reads GLLLSLLLLLVLVLLGASYWY. Phosphotyrosine; by HCK and LCK is present on residues Tyr717 and Tyr737. The Cytoplasmic segment spans residues 720–864; the sequence is RARLHQRLCQ…PPPAASSLYL (145 aa). Positions 738-864 are disordered; that stretch reads RAAQSGPPER…PPPAASSLYL (127 aa). A compositionally biased stretch (polar residues) spans 753-765; sequence RAQQMPGTKQANV. Pro residues-rich tracts occupy residues 768 to 780 and 810 to 825; these read PVPP…PNPV and PQGP…PLPA. The short motif at 816–822 is the SH3-binding element; sequence PPPPRKP. Residues 826–850 show a composition bias toward low complexity; sequence NPQGRPPLGDLPGPGDGSLQLVVPS. Positions 851-857 match the SH3-binding motif; that stretch reads RPAPPPP.

Interacts with ITAGV-ITGB3 (vitronectin receptor). Interacts with SH3GL2 and SNX9; this interaction occurs preferentially with ADAM15 precursor, rather than the processed form, suggesting it occurs in a secretory pathway compartment prior to the medial Golgi. Interacts with ITAG9-ITGB1. Interacts specifically with Src family protein-tyrosine kinases (PTKs). Interacts with SH3PXD2A. Interacts with ITAGV-ITGB1. Interacts with GRB2, HCK, ITSN1, ITSN2, LYN, MAPK1, MAPK3, NCF1, NCK1, nephrocystin, PTK6, SNX33, LCK and SRC. The cofactor is Zn(2+). The precursor is cleaved by a furin endopeptidase. Post-translationally, phosphorylation increases association with PTKs. Predominantly expressed in brain, spinal cord, sciatic nerve and lung. Expressed at lower levels in all other tissues. In the peripheral nervous system, expressed predominantly by Schwann cells. In the central nervous system, preferentially expressed by neuronal cells.

Its subcellular location is the endomembrane system. It is found in the cell junction. It localises to the adherens junction. The protein resides in the cell projection. The protein localises to the cilium. Its subcellular location is the flagellum. It is found in the cytoplasmic vesicle. It localises to the secretory vesicle. The protein resides in the acrosome. Functionally, active metalloproteinase with gelatinolytic and collagenolytic activity. Plays a role in the wound healing process. Mediates both heterotypic intraepithelial cell/T-cell interactions and homotypic T-cell aggregation. Inhibits beta-1 integrin-mediated cell adhesion and migration of airway smooth muscle cells. Suppresses cell motility on or towards fibronectin possibly by driving alpha-v/beta-1 integrin (ITAGV-ITGB1) cell surface expression via ERK1/2 inactivation. Cleaves E-cadherin in response to growth factor deprivation. Plays a role in glomerular cell migration. Plays a role in pathological neovascularization. May play a role in cartilage remodeling. May be proteolytically processed, during sperm epididymal maturation and the acrosome reaction. May play a role in sperm-egg binding through its disintegrin domain. In Rattus norvegicus (Rat), this protein is Disintegrin and metalloproteinase domain-containing protein 15 (Adam15).